Consider the following 875-residue polypeptide: Phosphoenolpyruvate carboxylase (875 aa).

Catalysis depends on residues histidine 137 and lysine 542.

This sequence belongs to the PEPCase type 1 family. It depends on Mg(2+) as a cofactor.

It catalyses the reaction oxaloacetate + phosphate = phosphoenolpyruvate + hydrogencarbonate. Its function is as follows. Forms oxaloacetate, a four-carbon dicarboxylic acid source for the tricarboxylic acid cycle. The protein is Phosphoenolpyruvate carboxylase of Pseudomonas putida (strain ATCC 700007 / DSM 6899 / JCM 31910 / BCRC 17059 / LMG 24140 / F1).